The chain runs to 475 residues: MTDADSAVPPRLDEDAISKLELTEVADLIRTRQLTSAEVTESTLRRIERLDPQLKSYAFVMPETALAAARAADADIARGHYEGVLHGVPIGVKDLCYTVDAPTAAGTTIFRDFRPAYDATVVARLRAAGAVIIGKLAMTEGAYLGYHPSLPTPVNPWDPTAWAGVSSSGCGVATAAGLCFGSIGSDTGGSIRFPTSMCGVTGIKPTWGRVSRHGVVELAASYDHVGPITRSAHDAAVLLSVIAGSDIHDPSCSAEPVPDYAADLALTRIPRVGVDWSQTTSFDEDTTAMLADVVKTLDDIGWPVIDVKLPALAPMVAAFGKMRAVETAIAHADTYPARADEYGPIMRAMIDAGHRLAAVEYQTLTERRLEFTRSLRRVFHDVDILLMPSAGIASPTLETMRGLGQDPELTARLAMPTAPFNVSGNPAICLPAGTTARGTPLGVQFIGREFDEHLLVRAGHAFQQVTGYHRRRPPV.

Active-site charge relay system residues include K93 and S166. S190 acts as the Acyl-ester intermediate in catalysis.

It belongs to the amidase family.

The catalysed reaction is a monocarboxylic acid amide + H2O = a monocarboxylate + NH4(+). The polypeptide is Putative amidase AmiD (amiD) (Mycobacterium bovis (strain ATCC BAA-935 / AF2122/97)).